The sequence spans 758 residues: Dachshund homolog 1 (758 aa).

Disordered regions lie at residues 1–105 (MAVP…SNCN) and 134–185 (INAS…TPQN). Residues 20-53 (ISTSASSSGTTTSTSSATSSPAPSIGPPASSGPT) show a composition bias toward low complexity. A compositionally biased stretch (gly residues) spans 73–102 (TGGGGGGGGSGGGGGSSGNGGGGGGGGGGS). Positions 140–163 (SSSSSSSSSSSSSSSSSSSSSSSS) are enriched in low complexity. The span at 174 to 185 (STPSPVENTPQN) shows a compositional bias: polar residues. The interval 189–275 (KMVDLRGAKV…LISRKDFETL (87 aa)) is DACHbox-N. The tract at residues 189–384 (KMVDLRGAKV…VGSSDGSWDK (196 aa)) is interaction with SIX6 and HDAC3. Disordered regions lie at residues 280–302 (TNAS…PENS), 358–414 (SNNQ…PLSH), 474–532 (SPPS…RIPV), and 544–564 (MGLS…GHDM). 3 stretches are compositionally biased toward polar residues: residues 292–301 (RTQSVTSPEN), 358–380 (SNNQ…SSDG), and 387–399 (LPSS…QASI). Phosphoserine is present on Ser-491. Low complexity predominate over residues 506-524 (SHPSSHRSSSVSSSPARTE). Over residues 555-564 (KEGDLAGHDM) the composition is skewed to basic and acidic residues. The tract at residues 616–696 (SSIETLLTNI…KAKRKLQEAL (81 aa)) is DACHbox-C. Residues 627–706 (GLLKVAIDNA…EFETKRREQA (80 aa)) are interaction with SIN3A. Residues 630 to 718 (KVAIDNARAQ…TLKQAASTDS (89 aa)) adopt a coiled-coil conformation.

Belongs to the DACH/dachshund family. Interacts with SIX1, SIX6 and EYA3. Interacts with NCOR1 and HDAC3 through its N-terminus. Interacts with SIN3A through its C-terminus. Interacts with SMAD3 and SMAD4. As to expression, widely expressed. Isoform 2 is found in brain, heart, kidney, liver, leukocytes and spleen. Isoform 3 is found in liver and heart. Isoform 4 is found in spleen.

Its subcellular location is the nucleus. Functionally, transcription factor that is involved in regulation of organogenesis. Seems to be a regulator of SIX1, SIX6 and probably SIX5. Corepression of precursor cell proliferation in myoblasts by SIX1 is switched to coactivation through recruitment of EYA3 to the SIX1-DACH1 complex. Transcriptional activation also seems to involve association of CREBBP. Seems to act as a corepressor of SIX6 in regulating proliferation by directly repressing cyclin-dependent kinase inhibitors, including the p27Kip1 promoter. Inhibits TGF-beta signaling through interaction with SMAD4 and NCOR1. Binds to chromatin DNA via its DACHbox-N domain. The sequence is that of Dachshund homolog 1 (DACH1) from Homo sapiens (Human).